A 983-amino-acid polypeptide reads, in one-letter code: Alanine--tRNA ligase, mitochondrial (983 aa).

The transit peptide at M1–T24 directs the protein to the mitochondrion. At S504 the chain carries Phosphoserine. H625, H629, C744, and H748 together coordinate Zn(2+). S975 is modified (phosphoserine).

Belongs to the class-II aminoacyl-tRNA synthetase family. In terms of assembly, monomer. The cofactor is Zn(2+).

It localises to the cytoplasm. Its subcellular location is the mitochondrion. The catalysed reaction is tRNA(Ala) + L-alanine + ATP = L-alanyl-tRNA(Ala) + AMP + diphosphate. Catalyzes the attachment of alanine to tRNA(Ala) in a two-step reaction: alanine is first activated by ATP to form Ala-AMP and then transferred to the acceptor end of tRNA(Ala). Also edits incorrectly charged tRNA(Ala) via its editing domain. The sequence is that of Alanine--tRNA ligase, mitochondrial from Saccharomyces cerevisiae (strain ATCC 204508 / S288c) (Baker's yeast).